Reading from the N-terminus, the 147-residue chain is 3-dehydroquinate dehydratase (147 aa).

Catalysis depends on Tyr23, which acts as the Proton acceptor. Substrate is bound by residues Asn75, His81, and Asp88. His101 acts as the Proton donor in catalysis. Residues Leu102 to Ser103 and Arg112 each bind substrate.

Belongs to the type-II 3-dehydroquinase family. As to quaternary structure, homododecamer.

It carries out the reaction 3-dehydroquinate = 3-dehydroshikimate + H2O. Its pathway is metabolic intermediate biosynthesis; chorismate biosynthesis; chorismate from D-erythrose 4-phosphate and phosphoenolpyruvate: step 3/7. Catalyzes a trans-dehydration via an enolate intermediate. The polypeptide is 3-dehydroquinate dehydratase (Stutzerimonas stutzeri (strain A1501) (Pseudomonas stutzeri)).